Here is a 123-residue protein sequence, read N- to C-terminus: MKKPQRGYARQDRVKEQIMRELAELVRTGLKDPRAGFITINEVEITRDYSHATVFYTVLNQDTREITEEVLEHARGHLRSELSKRIKLFKIPELHFKYDESLERGMSLSALIDQVAAEKPVED.

It belongs to the RbfA family. As to quaternary structure, monomer. Binds 30S ribosomal subunits, but not 50S ribosomal subunits or 70S ribosomes.

The protein localises to the cytoplasm. Its function is as follows. One of several proteins that assist in the late maturation steps of the functional core of the 30S ribosomal subunit. Associates with free 30S ribosomal subunits (but not with 30S subunits that are part of 70S ribosomes or polysomes). Required for efficient processing of 16S rRNA. May interact with the 5'-terminal helix region of 16S rRNA. This Neisseria gonorrhoeae (strain ATCC 700825 / FA 1090) protein is Ribosome-binding factor A.